A 252-amino-acid polypeptide reads, in one-letter code: Cell division protein ZapD (252 aa).

The protein belongs to the ZapD family. In terms of assembly, interacts with FtsZ.

The protein localises to the cytoplasm. Functionally, cell division factor that enhances FtsZ-ring assembly. Directly interacts with FtsZ and promotes bundling of FtsZ protofilaments, with a reduction in FtsZ GTPase activity. This chain is Cell division protein ZapD, found in Ralstonia nicotianae (strain ATCC BAA-1114 / GMI1000) (Ralstonia solanacearum).